The sequence spans 694 residues: Polynucleotide 3'-phosphatase ZDP (694 aa).

2 PARP-type zinc fingers span residues 50-132 (VVAE…EQCG) and 165-247 (VIAD…EVNK). Residues Cys62, Cys65, His93, Cys96, Cys177, Cys180, His208, and Cys211 each coordinate Zn(2+). The disordered stretch occupies residues 266 to 331 (AIADNELTEE…SPDSSKVISE (66 aa)). Residues 302-321 (ESKKPASDEISEQKTKDVKN) show a composition bias toward basic and acidic residues. Over residues 322–331 (SPDSSKVISE) the composition is skewed to polar residues. Residues 328-410 (VISEYAKSSR…ALKELVQQCG (83 aa)) form a PARP-type 3 zinc finger. The Zn(2+) site is built by Cys340, Cys343, His371, and Cys374.

This sequence in the C-terminal section; belongs to the DNA 3' phosphatase family. Interacts with ROS1 (via the central region). Binds to XRCC1.

It localises to the nucleus. The protein resides in the nucleoplasm. The catalysed reaction is a 3'end (2'-deoxyribonucleotide 3'-phosphate)-DNA + H2O = a 3'-end 2'-deoxyribonucleotide-DNA + phosphate. With respect to regulation, activated by the presence of DNA. Stimulated by XRCC1. Functionally, nick-sensing 3'-phosphoesterase involved in a base excision repair pathway required for active DNA demethylation. The N-terminal DNA-binding domain binds specifically to gap sites and sharply bends the target DNA. Lacks 5'-kinase activity but is capable of 3'-phosphoglycolate end processing. Inactive on 3'-alpha,beta-unsaturated aldehyde (3'-dRP). Protects partially genes from transcriptional silencing by preventing promoter DNA hypermethylation. The polypeptide is Polynucleotide 3'-phosphatase ZDP (ZDP) (Arabidopsis thaliana (Mouse-ear cress)).